The chain runs to 317 residues: Porphobilinogen deaminase (317 aa).

C245 carries the S-(dipyrrolylmethanemethyl)cysteine modification.

The protein belongs to the HMBS family. As to quaternary structure, monomer. The cofactor is dipyrromethane.

The catalysed reaction is 4 porphobilinogen + H2O = hydroxymethylbilane + 4 NH4(+). Its pathway is porphyrin-containing compound metabolism; protoporphyrin-IX biosynthesis; coproporphyrinogen-III from 5-aminolevulinate: step 2/4. It functions in the pathway porphyrin-containing compound metabolism; chlorophyll biosynthesis. Functionally, tetrapolymerization of the monopyrrole PBG into the hydroxymethylbilane pre-uroporphyrinogen in several discrete steps. This Prochlorococcus marinus (strain MIT 9313) protein is Porphobilinogen deaminase.